A 185-amino-acid chain; its full sequence is Serine/arginine-rich splicing factor RSZ21 (185 aa).

Residues 2–73 (ARLYVGNLDP…WRVELSRNSS (72 aa)) form the RRM domain. The CCHC-type zinc-finger motif lies at 86 to 103 (MKCYECGETGHFARECRL). Residues 104–185 (RIGPGGLGSG…DGGRYRRSRS (82 aa)) form a disordered region. Residues 113–123 (GKRRSRSRSRS) show a composition bias toward basic residues. Composition is skewed to low complexity over residues 124–138 (RSPQ…GRRS) and 151–162 (VSPVRGRSYSRS).

This sequence belongs to the splicing factor SR family. Post-translationally, extensively phosphorylated on serine residues in the RS domain. In terms of tissue distribution, expressed in roots, leaves and immature seeds.

Its subcellular location is the nucleus. Involved in pre-mRNA splicing. The chain is Serine/arginine-rich splicing factor RSZ21 (RSZP21) from Oryza sativa subsp. japonica (Rice).